Consider the following 1865-residue polypeptide: Transient receptor potential cation channel subfamily M member 7 (1865 aa).

M1 is subject to N-acetylmethionine. The Cytoplasmic segment spans residues 1–850 (MSQKSWIEST…ITRKFYAFYH (850 aa)). At S101 the chain carries Phosphoserine. Positions 544–555 (NRRSGRNTSSST) are enriched in low complexity. The segment at 544 to 575 (NRRSGRNTSSSTPQLRKSHESFGNRADKKEKM) is disordered. Positions 560–573 (KSHESFGNRADKKE) are enriched in basic and acidic residues. Residues 851-876 (APIVKFWFNTLAYLGFLMLYTFVVLV) form a helical membrane-spanning segment. At 877–882 (QMEQLP) the chain is on the extracellular side. A helical membrane pass occupies residues 883 to 904 (SVQEWIVIAYIFTYAIEKVREI). Topologically, residues 905 to 923 (FMSEAGKVNQKIKVWFSDY) are cytoplasmic. A helical membrane pass occupies residues 924–943 (FNISDTIAIISFFIGFGLRF). Residues 944–956 (GAKWNFANAYDNH) lie on the Extracellular side of the membrane. Residues 957–980 (VFVAGRLIYCLNIIFWYVRLLDFL) traverse the membrane as a helical segment. Residues 981–999 (AVNQQAGPYVMMIGKMVAN) lie on the Cytoplasmic side of the membrane. Residues 1000–1023 (MFYIVVIMALVLLSFGVPRKAILY) form a helical membrane-spanning segment. Residues 1024 to 1025 (PH) are Extracellular-facing. The pore-forming intramembrane region spans 1026 to 1066 (EAPSWTLAKDIVFHPYWMIFGEVYAYEIDVCANDSVIPQIC). Residues 1067-1069 (GPG) lie on the Extracellular side of the membrane. The helical transmembrane segment at 1070 to 1098 (TWLTPFLQAVYLFVQYIIMVNLLIAFFNN) threads the bilayer. At 1099-1865 (VYLQVKAISN…ESTNSVRLML (767 aa)) the chain is on the cytoplasmic side. Residues C1143, C1144, and C1146 are each lipidated (S-palmitoyl cysteine). T1163 bears the Phosphothreonine; by autocatalysis mark. Phosphoserine; by autocatalysis occurs at positions 1191 and 1193. The stretch at 1198-1250 (RVTFERVEQMCIQIKEVGDRVNYIKRSLQSLDSQIGHLQDLSALTVDTLKTLT) forms a coiled coil. S1224 is subject to Phosphoserine. 2 positions are modified to phosphoserine; by autocatalysis: S1255 and S1258. T1265 is modified (phosphothreonine; by autocatalysis). S1287 is subject to Phosphoserine; by autocatalysis. S1301 bears the Phosphoserine mark. Position 1358 is a phosphoserine; by autocatalysis (S1358). Phosphoserine occurs at positions 1361 and 1386. The span at 1386–1398 (SSSTSIPHLSSPP) shows a compositional bias: low complexity. Residues 1386-1407 (SSSTSIPHLSSPPTKFFVSTPS) form a disordered region. Phosphoserine; by autocatalysis is present on residues S1387 and S1390. Residues S1395 and S1396 each carry the phosphoserine modification. Residue S1404 is modified to Phosphoserine; by autocatalysis. At T1405 the chain carries Phosphothreonine; by autocatalysis. S1407 is subject to Phosphoserine; by autocatalysis. Phosphothreonine; by autocatalysis is present on T1435. S1446 is modified (phosphoserine; by autocatalysis). Position 1455 is a phosphothreonine; by autocatalysis (T1455). 2 positions are modified to phosphoserine; by autocatalysis: S1456 and S1463. T1467 bears the Phosphothreonine mark. Phosphoserine; by autocatalysis is present on S1468. A Phosphothreonine; by autocatalysis modification is found at T1471. A phosphoserine; by autocatalysis mark is found at S1476 and S1477. Phosphothreonine; by autocatalysis is present on T1482. The tract at residues 1492 to 1511 (HSKQAEKISRRPSTEDTHEV) is disordered. S1493 bears the Phosphoserine; by autocatalysis mark. Residues 1494–1511 (KQAEKISRRPSTEDTHEV) show a composition bias toward basic and acidic residues. Phosphoserine is present on S1500. S1504 is modified (phosphoserine; by autocatalysis). Residue T1508 is modified to Phosphothreonine; by autocatalysis. S1513, S1527, and S1533 each carry phosphoserine; by autocatalysis. The tract at residues 1524-1543 (DRPSNREMPSEEGTLNGLTS) is disordered. Phosphothreonine; by autocatalysis occurs at positions 1537 and 1542. Residue S1543 is modified to Phosphoserine; by autocatalysis. The residue at position 1551 (T1551) is a Phosphothreonine; by autocatalysis. A phosphoserine; by autocatalysis mark is found at S1567 and S1569. The residue at position 1583 (T1583) is a Phosphothreonine; by autocatalysis. The 231-residue stretch at 1594 to 1824 (ILNNSMSSWS…CCRKLKLPDL (231 aa)) folds into the Alpha-type protein kinase domain. Phosphoserine; by autocatalysis is present on residues S1598 and S1615. G1621, G1622, L1623, R1624, and K1648 together coordinate ADP. S1660 carries the phosphoserine; by autocatalysis modification. T1685 carries the phosphothreonine; by autocatalysis modification. E1720, E1721, and M1723 together coordinate ADP. Residue H1753 coordinates Zn(2+). D1767 acts as the Proton acceptor in catalysis. D1777 serves as a coordination point for ADP. S1779 is subject to Phosphoserine; by autocatalysis. Residues H1810, C1812, and C1816 each coordinate Zn(2+). Position 1830 is a phosphothreonine; by autocatalysis (T1830). The tract at residues 1836 to 1865 (FPQDEPSDLNLQPGNSTKESESTNSVRLML) is disordered. Residues 1844 to 1865 (LNLQPGNSTKESESTNSVRLML) are compositionally biased toward polar residues. S1851 bears the Phosphoserine mark. Phosphoserine; by autocatalysis is present on S1860.

In the C-terminal section; belongs to the protein kinase superfamily. Alpha-type protein kinase family. ALPK subfamily. This sequence in the N-terminal section; belongs to the transient receptor (TC 1.A.4) family. LTrpC subfamily. TRPM7 sub-subfamily. Homotetramer. Interacts with PLCB1. Forms heteromers with TRPM6; heteromeric channels are functionally different from the homomeric channels. Requires Zn(2+) as cofactor. In terms of processing, palmitoylated; palmitoylation at Cys-1143, Cys-1144 and Cys-1146 promotes TRPM7 trafficking from the Golgi to the surface membrane. Post-translationally, autophosphorylated; autophosphorylation of C-terminus regulates TRPM7 kinase activity towards its substrates. The C-terminal kinase domain can be cleaved from the channel segment in a cell-type-specific fashion. TRPM7 is cleaved by caspase-8, dissociating the kinase from the ion-conducting pore. The cleaved kinase fragments (M7CKs) can translocate to the cell nucleus and binds chromatin-remodeling complex proteins in a Zn(2+)-dependent manner to ultimately phosphorylate specific Ser/Thr residues of histones.

Its subcellular location is the cell membrane. It localises to the cytoplasmic vesicle membrane. It is found in the nucleus. It catalyses the reaction L-seryl-[protein] + ATP = O-phospho-L-seryl-[protein] + ADP + H(+). It carries out the reaction L-threonyl-[protein] + ATP = O-phospho-L-threonyl-[protein] + ADP + H(+). The enzyme catalyses Mg(2+)(in) = Mg(2+)(out). The catalysed reaction is Ca(2+)(in) = Ca(2+)(out). It catalyses the reaction Zn(2+)(in) = Zn(2+)(out). With respect to regulation, channel displays constitutive activity. Channel activity is negatively regulated by cytosolic Mg(2+) and Mg-ATP. Channel activity is negatively regulated by low intracellular pH. Resting free cytosolic Mg(2+) and Mg-ATP concentrations seem to be sufficient to block native TRPM7 channel activity. TRPM7 channel activity is highly dependent on membrane levels of phosphatidylinositol 4,5 bisphosphate (PIP2). PIP2 hydrolysis negatively regulates TRPM7 channel activity. TRPM7 kinase activity does not affect channel activity. The kinase activity is controlled through the autophosphorylation of a serine/threonine-rich region located N-terminal to the catalytic domain. Its function is as follows. Bifunctional protein that combines an ion channel with an intrinsic kinase domain, enabling it to modulate cellular functions either by conducting ions through the pore or by phosphorylating downstream proteins via its kinase domain. The channel is highly permeable to divalent cations, specifically calcium (Ca2+), magnesium (Mg2+) and zinc (Zn2+) and mediates their influx. Controls a wide range of biological processes such as Ca2(+), Mg(2+) and Zn(2+) homeostasis, vesicular Zn(2+) release channel and intracellular Ca(2+) signaling, embryonic development, immune responses, cell motility, proliferation and differentiation. The C-terminal alpha-kinase domain autophosphorylates cytoplasmic residues of TRPM7. In vivo, TRPM7 phosphorylates SMAD2, suggesting that TRPM7 kinase may play a role in activating SMAD signaling pathways. In vitro, TRPM7 kinase phosphorylates ANXA1 (annexin A1), myosin II isoforms and a variety of proteins with diverse cellular functions. In terms of biological role, the cleaved channel exhibits substantially higher current and potentiates Fas receptor signaling. The C-terminal kinase domain can be cleaved from the channel segment in a cell-type-specific fashion. In immune cells, the TRPM7 kinase domain is clipped from the channel domain by caspases in response to Fas-receptor stimulation. The cleaved kinase fragments can translocate to the nucleus, and bind chromatin-remodeling complex proteins in a Zn(2+)-dependent manner to ultimately phosphorylate specific Ser/Thr residues of histones known to be functionally important for cell differentiation and embryonic development. In Homo sapiens (Human), this protein is Transient receptor potential cation channel subfamily M member 7 (TRPM7).